The sequence spans 111 residues: Large ribosomal subunit protein uL24 (111 aa).

The span at 48–65 (EKPSRSNREGGRTEREAP) shows a compositional bias: basic and acidic residues. The interval 48–111 (EKPSRSNREG…AKTTGEELDD (64 aa)) is disordered. The span at 69-80 (SNVNPIDSNGES) shows a compositional bias: polar residues. The segment covering 86–95 (KKVEDPDTGR) has biased composition (basic and acidic residues).

It belongs to the universal ribosomal protein uL24 family. As to quaternary structure, part of the 50S ribosomal subunit.

Functionally, one of two assembly initiator proteins, it binds directly to the 5'-end of the 23S rRNA, where it nucleates assembly of the 50S subunit. Its function is as follows. One of the proteins that surrounds the polypeptide exit tunnel on the outside of the subunit. The polypeptide is Large ribosomal subunit protein uL24 (Salinibacter ruber (strain DSM 13855 / M31)).